Consider the following 660-residue polypeptide: MKAVIFAYHDMGCQGVQAVLDAGYEIAAIFTHADNPAENTFFGSVSRLAAGLGIPVYAPDNVNHPIWVDRIAELAPDIIFSFYYRNLLSEEILHLAPAGAFNLHGSLLPAYRGRAPLNWVLVNGESETGVTLHRMVKRADAGEIVASQRVAIAQDDVALTLHHKLCQAARQLLNSILPTMKCGDIPSVPQRESDATYYGRRRPEDGLIDWHKPVSTVHNLVRAVAAPWPGAFSYNGSQKFTIWSSRICPDAQGALPGSVISVSPLRVACADGALEIITGQAGDGITVQGSQLAQTLGLVAGARLNRPPATSGKRRIRVLILGVNGFIGNHLTERLLNEENYEVYGMDIGSNAISRFLLHPRFHFVEGDISIHSEWIEYHVKKCDVVLPLVAIATPIEYTRNPLRVFELDFEENLRIIRYCVKYRKRVVFPSTSEVYGMCTDASFDEDKSNLIVGPVNKPRWIYSVSKQLLDRVIWAYGEKEGLRFTLFRPFNWMGPRLDSLNAARIGSSRAITQLILNLVEGTPIKLIDGGQQKRCFTDIRDGIEALFRIIVNEGDRCDGKIINIGNPDNEASIQELATLLLDSFDKHPLRCHFPPFAGFQVVESRSYYGKGYQDVAHRKPSIDNARRCLGWEPSIAMRDTVEETLDFFLRSVDVAERAS.

Residues 1 to 304 (MKAVIFAYHD…TLGLVAGARL (304 aa)) form a formyltransferase ArnAFT region. Histidine 104 serves as the catalytic Proton donor; for formyltransferase activity. (6R)-10-formyltetrahydrofolate is bound by residues arginine 114 and 136–140 (VKRAD). The tract at residues 314 to 660 (RRIRVLILGV…RSVDVAERAS (347 aa)) is dehydrogenase ArnADH. NAD(+)-binding positions include aspartate 347 and 368-369 (DI). UDP-alpha-D-glucuronate-binding positions include alanine 393, tyrosine 398, and 432–433 (TS). Catalysis depends on glutamate 434, which acts as the Proton acceptor; for decarboxylase activity. Residues arginine 460, asparagine 492, 526–535 (KLIDGGQQKR), and tyrosine 613 each bind UDP-alpha-D-glucuronate. Arginine 619 acts as the Proton donor; for decarboxylase activity in catalysis.

The protein in the N-terminal section; belongs to the Fmt family. UDP-L-Ara4N formyltransferase subfamily. In the C-terminal section; belongs to the NAD(P)-dependent epimerase/dehydratase family. UDP-glucuronic acid decarboxylase subfamily. Homohexamer, formed by a dimer of trimers.

The catalysed reaction is UDP-alpha-D-glucuronate + NAD(+) = UDP-beta-L-threo-pentopyranos-4-ulose + CO2 + NADH. It carries out the reaction UDP-4-amino-4-deoxy-beta-L-arabinose + (6R)-10-formyltetrahydrofolate = UDP-4-deoxy-4-formamido-beta-L-arabinose + (6S)-5,6,7,8-tetrahydrofolate + H(+). It functions in the pathway nucleotide-sugar biosynthesis; UDP-4-deoxy-4-formamido-beta-L-arabinose biosynthesis; UDP-4-deoxy-4-formamido-beta-L-arabinose from UDP-alpha-D-glucuronate: step 1/3. Its pathway is nucleotide-sugar biosynthesis; UDP-4-deoxy-4-formamido-beta-L-arabinose biosynthesis; UDP-4-deoxy-4-formamido-beta-L-arabinose from UDP-alpha-D-glucuronate: step 3/3. It participates in bacterial outer membrane biogenesis; lipopolysaccharide biosynthesis. In terms of biological role, bifunctional enzyme that catalyzes the oxidative decarboxylation of UDP-glucuronic acid (UDP-GlcUA) to UDP-4-keto-arabinose (UDP-Ara4O) and the addition of a formyl group to UDP-4-amino-4-deoxy-L-arabinose (UDP-L-Ara4N) to form UDP-L-4-formamido-arabinose (UDP-L-Ara4FN). The modified arabinose is attached to lipid A and is required for resistance to polymyxin and cationic antimicrobial peptides. The chain is Bifunctional polymyxin resistance protein ArnA from Salmonella newport (strain SL254).